The sequence spans 713 residues: Forkhead box protein P2 (713 aa).

Over residues 1–28 (MMQESATETISNSSMNQNGMSTLSSQLD) the composition is skewed to polar residues. Disordered regions lie at residues 1–44 (MMQE…SSEV) and 283–337 (KHGG…TGAS). Over residues 290-303 (TTNNSSSTTSSTTS) the composition is skewed to low complexity. The segment covering 313 to 322 (SIVNGQSSVL) has biased composition (polar residues). Over residues 324-335 (ARRDSSSHEETG) the composition is skewed to basic and acidic residues. Residues 344–369 (GVCKWPGCESICEDFGQFLKHLNNEH) form a C2H2-type zinc finger. The tract at residues 386–407 (VQQLEIQLSKERERLQAMMTHL) is leucine-zipper. Residues 420 to 424 (PLNLV) are CTBP1-binding. The segment covering 436-457 (TSPQSLPQTPTTPTAPVTPITQ) has biased composition (low complexity). Residues 436 to 463 (TSPQSLPQTPTTPTAPVTPITQGPSVIT) form a disordered region. Positions 502–592 (RPPFTYATLI…SQKITGSPTL (91 aa)) form a DNA-binding region, fork-head. Disordered stretches follow at residues 647–666 (LDHIDSNGNSSPGCSPQPHI) and 676–713 (VIAEDEDCPMSLVTTANHSPELEDDREIEEEPLSEDLE). Over residues 697–713 (LEDDREIEEEPLSEDLE) the composition is skewed to acidic residues.

As to quaternary structure, forms homodimers and heterodimers with FOXP1 and FOXP4. Dimerization is required for DNA-binding. Interacts with CTBP1. Interacts with FOXP1. Interacts with TBR1. Interacts with ZMYM2.

The protein resides in the nucleus. Functionally, transcriptional repressor that may play a role in the specification and differentiation of lung epithelium. May also play a role in developing neural, gastrointestinal and cardiovascular tissues. Can act with CTBP1 to synergistically repress transcription but CTPBP1 is not essential. Plays a role in synapse formation by regulating SRPX2 levels. The polypeptide is Forkhead box protein P2 (FOXP2) (Gorilla gorilla gorilla (Western lowland gorilla)).